The chain runs to 625 residues: Chaperone protein DnaK (625 aa).

At Thr-197 the chain carries Phosphothreonine; by autocatalysis. Residues 598-625 form a disordered region; the sequence is MYKKDDNASGEQSGGKKKDDDVIDAEVE.

It belongs to the heat shock protein 70 family.

Functionally, acts as a chaperone. This chain is Chaperone protein DnaK, found in Campylobacter curvus (strain 525.92).